The chain runs to 519 residues: Laccase-2 (519 aa).

Residues 1-20 (MGLQRFSFFVTLALVARSLA) form the signal peptide. Plastocyanin-like domains lie at 22–147 (IGPV…FVVY) and 159–301 (VDNE…ILRY). The N-linked (GlcNAc...) asparagine glycan is linked to N74. Cu cation contacts are provided by H84, H86, H129, and H131. Cystine bridges form between C105–C508 and C137–C225. N-linked (GlcNAc...) asparagine glycosylation is found at N161, N228, N237, N271, N353, and N361. In terms of domain architecture, Plastocyanin-like 3 spans 368-490 (TVPVLLQILS…AGFAIVFAED (123 aa)). Cu cation contacts are provided by H415, H418, H420, H472, C473, H474, and H478.

This sequence belongs to the multicopper oxidase family. As to quaternary structure, homodimer. Cu cation serves as cofactor.

It localises to the secreted. It catalyses the reaction 4 hydroquinone + O2 = 4 benzosemiquinone + 2 H2O. Lignin degradation and detoxification of lignin-derived products. This is Laccase-2 from Trametes villosa (White-rot fungus).